We begin with the raw amino-acid sequence, 674 residues long: Tripartite terminase subunit 3 (674 aa).

The Walker A motif motif lies at 212-219; it reads VPRRHGKT. Residues 305-310 carry the Walker B motif motif; sequence LLLVDE. The For ATPase activity role is filled by Glu-310. Residues Asp-463 and Glu-534 each act as for nuclease activity in the active site. Positions 580-600 are required for interaction with UL56 and DNA packaging; it reads GRDKALAVEQFISRFNSGYIK. Asp-651 functions as the For nuclease activity in the catalytic mechanism.

The protein belongs to the herpesviridae TRM3 protein family. Interacts with the terminase subunits TRM1 and TRM2. Interacts with portal protein.

The protein resides in the host nucleus. Its function is as follows. Component of the molecular motor that translocates viral genomic DNA in empty capsid during DNA packaging. Forms a tripartite terminase complex together with TRM1 and TRM2 in the host cytoplasm. Once the complex reaches the host nucleus, it interacts with the capsid portal vertex. This portal forms a ring in which genomic DNA is translocated into the capsid. TRM3 carries an RNase H-like nuclease activity that plays an important role for the cleavage of concatemeric viral DNA into unit length genomes. This chain is Tripartite terminase subunit 3, found in Homo sapiens (Human).